A 542-amino-acid chain; its full sequence is Probable cysteine proteinase 361L (542 aa).

Residues Cys172, His382, and Asn414 contribute to the active site. A helical membrane pass occupies residues 520–540; the sequence is TNNWYIYALIIIFILIIFFVL.

It belongs to the peptidase C1 family.

The protein localises to the membrane. Probable cysteine protease. This Acheta domesticus (House cricket) protein is Probable cysteine proteinase 361L.